The following is a 3704-amino-acid chain: Fatty acid synthase 2 (3704 aa).

Over residues 27–41 (AVSAHGSPPSSASPG) the composition is skewed to low complexity. A disordered region spans residues 27–52 (AVSAHGSPPSSASPGPDDKAFSVDGT). Residues 216–475 (ALFGGQGNNH…QARIPFSKRK (260 aa)) form an acetyltransferase (AT) domain region. Residues 639–887 (SRLLGKPPIM…LIASTQGCSD (249 aa)) form an enoyl reductase (ER) domain region. The interval 1216–1709 (GEQPSWIRAL…VPGDQLSVQL (494 aa)) is dehydratase (DH) domain. Residues 1624 to 1730 (PKTNEPYSRA…VQIDASNQRG (107 aa)) enclose the MaoC-like domain. The segment at 1747-2112 (YVFTGQGSQA…IEHVSEVTRS (366 aa)) is malonyl/palmitoyl transferase (MT/PT) domain. One can recognise a Carrier domain in the interval 2265–2343 (DERLDPLLTV…AALRPGYSGE (79 aa)). Ser-2303 carries the O-(pantetheine 4'-phosphoryl)serine modification. The interval 2733–2969 (GLDVLLTGVG…LGLVEPEFAS (237 aa)) is ketoreductase (KR) domain. Residues 3176 to 3623 (QQEIELTHDL…QVGGIAMILH (448 aa)) form the Ketosynthase family 3 (KS3) domain. Residues Cys-3359, His-3506, and His-3547 each act as for beta-ketoacyl synthase activity in the active site.

This sequence in the N-terminal section; belongs to the fungal fatty acid synthetase subunit beta family. In the C-terminal section; belongs to the thiolase-like superfamily. Fungal fatty acid synthetase subunit alpha family.

It functions in the pathway secondary metabolite biosynthesis. Fatty acid synthase; part of the gene cluster that mediates the biosynthesis of the glycolipid biosurfactant ustilagic acid (UA). UA is a secreted cellobiose glycolipid that is toxic for many microorganisms and confers biocontrol activity to U.maydis. UA consists of 15,16-dihydroxypalmitic or 2,15,16-trihydroxypalmitic acid, which is O-glycosidically linked to cellobiose at its terminal hydroxyl group. In addition, the cellobiose moiety is acetylated and acylated with a short-chain hydroxy fatty acid. UA biosynthesis starts with omega-hydroxylation of palmitic acid catalyzed by the cytochrome P450 monooxygenase cyp1. Terminal hydroxylation of palmitic acid precedes subterminal hydroxylation catalyzed by the cytochrome P450 monooxygenase cyp2. Sequential glucosylation of the hydroxy fatty acid is probably catalyzed by the glycosyltransferase ugt1. The cellobiose lipid is further decorated by acetylation of the proximal glucose residue and by acylation with a short-chain beta-hydroxy fatty acid at the distal glucose residue. The acyltransferase uat1 may be a good candidate for catalyzing either acetylation or acylation of the cellobiose lipid. The fatty acid synthase fas2 may be involved in synthesis of the carbon backbone of the short-chain beta-hydroxy fatty acid esterified to the cellobiose disaccharide. The secreted UA consists of a mixture of both alpha-hydroxylated and non-hydroxylated glycolipids; therefore, alpha-hydroxylation of the long-chain fatty, catalyzed by the fatty acid hydroxylase ahd1, occurs late in UA biosynthesis and may be the last step before secretion. The polypeptide is Fatty acid synthase 2 (Mycosarcoma maydis (Corn smut fungus)).